The chain runs to 205 residues: Arginine exporter protein ArgO (205 aa).

6 helical membrane passes run 1–21, 37–57, 68–88, 112–132, 147–167, and 182–202; these read MLAV…PLGP, LMVA…GIFG, LLAL…WGAF, VVTM…TFVV, WFAL…ALLA, and IINT…AWQG.

The protein belongs to the LysE/ArgO transporter (TC 2.A.75) family.

The protein localises to the cell inner membrane. The enzyme catalyses L-arginine(in) = L-arginine(out). Functionally, involved in the export of arginine. Important to control the intracellular level of arginine and the correct balance between arginine and lysine. The sequence is that of Arginine exporter protein ArgO from Serratia proteamaculans (strain 568).